A 407-amino-acid polypeptide reads, in one-letter code: Na(+)-translocating NADH-quinone reductase subunit F (407 aa).

A helical transmembrane segment spans residues Ile-6–Val-26. Residues Gly-35–Val-127 form the 2Fe-2S ferredoxin-type domain. Cys-70, Cys-76, Cys-79, and Cys-111 together coordinate [2Fe-2S] cluster. Residues Val-130–Lys-269 form the FAD-binding FR-type domain. The tract at residues Glu-272–Met-389 is catalytic.

Belongs to the NqrF family. As to quaternary structure, composed of six subunits; NqrA, NqrB, NqrC, NqrD, NqrE and NqrF. The cofactor is [2Fe-2S] cluster. FAD serves as cofactor.

It is found in the cell inner membrane. The catalysed reaction is a ubiquinone + n Na(+)(in) + NADH + H(+) = a ubiquinol + n Na(+)(out) + NAD(+). In terms of biological role, NQR complex catalyzes the reduction of ubiquinone-1 to ubiquinol by two successive reactions, coupled with the transport of Na(+) ions from the cytoplasm to the periplasm. The first step is catalyzed by NqrF, which accepts electrons from NADH and reduces ubiquinone-1 to ubisemiquinone by a one-electron transfer pathway. The chain is Na(+)-translocating NADH-quinone reductase subunit F from Pseudomonas aeruginosa (strain ATCC 15692 / DSM 22644 / CIP 104116 / JCM 14847 / LMG 12228 / 1C / PRS 101 / PAO1).